Here is a 489-residue protein sequence, read N- to C-terminus: MGNDKEKYSKLRNIIPEMRRVKHIYFVGIGGAGMGGIAEVLVNEGYRLSGSDIAENAVTQRLASLGAKIHLGHKEEQVHGADVVVVSTAIHADNPELLEAQALRIPVVRRAEMLAELMRYRHGVAVAGTHGKTTTTSLIASVYGQAERDPTFVIGGLLNSAGTNARLGNSRYLIAEADESDASFLHLQPMVSVITNIEADHMDTYEGDFERLKSTFIDFLHNLPFYGIAVMCIDDPVVRELLPSVGRKIVTYGFSEDADVQALNFVQDGYRSRFTLRRTGVEDVEVMVNLPGEHNVLNALAAIAVASEDEIEDEAIIQALADFEGIGRRFEQLGCFDTDRGEVVLVDDYGHHPSEVAATIKAAKLGWPEKRLVMIYQPHRYSRTRDLYEDFVEVLSQVDCLLLLDVYSAGEAAIPGADSRALCRSIRLRGQLDPIFVADQEQLLTLLPDVLQEGDLLLTQGAGNIGALARQLAQNRLGFESTNNDSNRG.

ATP is bound at residue 128 to 134 (GTHGKTT).

This sequence belongs to the MurCDEF family.

It is found in the cytoplasm. It catalyses the reaction UDP-N-acetyl-alpha-D-muramate + L-alanine + ATP = UDP-N-acetyl-alpha-D-muramoyl-L-alanine + ADP + phosphate + H(+). It functions in the pathway cell wall biogenesis; peptidoglycan biosynthesis. In terms of biological role, cell wall formation. This is UDP-N-acetylmuramate--L-alanine ligase from Shewanella woodyi (strain ATCC 51908 / MS32).